The following is a 906-amino-acid chain: Cadherin-2 (906 aa).

The signal sequence occupies residues 1–25; the sequence is MCRIAGAPRTLLPLLAALLQASVEA. Positions 26–159 are excised as a propeptide; that stretch reads SGEIALCKTG…HSGHLQRQKR (134 aa). Phosphoserine occurs at positions 96 and 135. Cadherin domains are found at residues 160-267, 268-382, 383-497, 498-603, and 604-714; these read DWVI…RPEF, LHQV…PPEF, TAMT…NPYF, APNP…DNAP, and QVLP…DVDR. At 160-724 the chain is on the extracellular side; sequence DWVIPPINLP…IVGAGLGTGA (565 aa). Residue Glu170 coordinates Ca(2+). Residue Asn190 is glycosylated (N-linked (GlcNAc...) asparagine). Residues Asp226, Glu228, Asp259, Met260, Asn261, Asp262, and Asn263 each coordinate Ca(2+). Residue Asn273 is glycosylated (N-linked (GlcNAc...) asparagine). Positions 293, 295, and 301 each coordinate Ca(2+). The N-linked (GlcNAc...) asparagine glycan is linked to Asn325. Position 353 (Asp353) interacts with Ca(2+). N-linked (GlcNAc...) asparagine glycosylation is found at Asn402, Asn572, Asn622, Asn651, and Asn692. A helical transmembrane segment spans residues 725 to 745; that stretch reads IIAILLCIIILLILVLMFVVW. The Cytoplasmic portion of the chain corresponds to 746 to 906; sequence MKRRDKERQA…LADMYGGGDD (161 aa). Low complexity predominate over residues 863–880; the sequence is SGSTAGSLSSLNSSSSGG. Residues 863 to 884 are disordered; the sequence is SGSTAGSLSSLNSSSSGGEQDY.

In terms of assembly, homodimer (via extracellular region). Can also form heterodimers with other cadherins (via extracellular region). Dimerization occurs in trans, i.e. with a cadherin chain from another cell. Interacts with CDCP1. Interacts with PCDH8; this complex may also include TAOK2. The interaction with PCDH8 may lead to internalization through TAOK2/p38 MAPK pathway. Identified in a complex containing FGFR4, NCAM1, CDH2, PLCG1, FRS2, SRC, SHC1, GAP43 and CTTN. May interact with OBSCN (via protein kinase domain 2). Interacts with FBXO45. Cleaved by MMP24. Ectodomain cleavage leads to the generation of a soluble 90 kDa N-terminal soluble fragment and a 45 kDa membrane-bound C-terminal fragment 1 (CTF1), which is further cleaved by gamma-secretase into a 35 kDa. Cleavage in neural stem cells by MMP24 affects CDH2-mediated anchorage of neural stem cells to ependymocytes in the adult subependymal zone, leading to modulate neural stem cell quiescence.

It is found in the cell membrane. It localises to the sarcolemma. The protein localises to the cell junction. Its subcellular location is the cell surface. The protein resides in the desmosome. It is found in the adherens junction. In terms of biological role, calcium-dependent cell adhesion protein; preferentially mediates homotypic cell-cell adhesion by dimerization with a CDH2 chain from another cell. Cadherins may thus contribute to the sorting of heterogeneous cell types. Acts as a regulator of neural stem cells quiescence by mediating anchorage of neural stem cells to ependymocytes in the adult subependymal zone: upon cleavage by MMP24, CDH2-mediated anchorage is affected, leading to modulate neural stem cell quiescence. Plays a role in cell-to-cell junction formation between pancreatic beta cells and neural crest stem (NCS) cells, promoting the formation of processes by NCS cells. Required for proper neurite branching. Required for pre- and postsynaptic organization. CDH2 may be involved in neuronal recognition mechanism. In hippocampal neurons, may regulate dendritic spine density. In Callithrix jacchus (White-tufted-ear marmoset), this protein is Cadherin-2 (CDH2).